Here is a 252-residue protein sequence, read N- to C-terminus: Small ribosomal subunit protein eS1 (252 aa).

Belongs to the eukaryotic ribosomal protein eS1 family. Component of the small ribosomal subunit. Mature ribosomes consist of a small (40S) and a large (60S) subunit. The 40S subunit contains about 33 different proteins and 1 molecule of RNA (18S). The 60S subunit contains about 49 different proteins and 3 molecules of RNA (25S, 5.8S and 5S).

The protein localises to the cytoplasm. In Enterocytozoon bieneusi (strain H348) (Microsporidian parasite), this protein is Small ribosomal subunit protein eS1.